The chain runs to 157 residues: SsrA-binding protein (157 aa).

Positions Lys136–Arg151 are enriched in basic and acidic residues. The interval Lys136 to Gly157 is disordered.

This sequence belongs to the SmpB family.

Its subcellular location is the cytoplasm. Its function is as follows. Required for rescue of stalled ribosomes mediated by trans-translation. Binds to transfer-messenger RNA (tmRNA), required for stable association of tmRNA with ribosomes. tmRNA and SmpB together mimic tRNA shape, replacing the anticodon stem-loop with SmpB. tmRNA is encoded by the ssrA gene; the 2 termini fold to resemble tRNA(Ala) and it encodes a 'tag peptide', a short internal open reading frame. During trans-translation Ala-aminoacylated tmRNA acts like a tRNA, entering the A-site of stalled ribosomes, displacing the stalled mRNA. The ribosome then switches to translate the ORF on the tmRNA; the nascent peptide is terminated with the 'tag peptide' encoded by the tmRNA and targeted for degradation. The ribosome is freed to recommence translation, which seems to be the essential function of trans-translation. The polypeptide is SsrA-binding protein (Rhodopseudomonas palustris (strain HaA2)).